A 283-amino-acid polypeptide reads, in one-letter code: K88 fimbrial protein AC (283 aa).

The signal sequence occupies residues 1-21 (MKKTLIALAIAASAASGMAHA).

This sequence belongs to the fimbrial K88 protein family. As to quaternary structure, K88 fimbria, 0.1-1 micrometer in length and 7 nanometers in diameter, is composed of about 100 identical subunits.

It is found in the fimbrium. In terms of biological role, K88 major fimbrial subunit. Fimbriae (also called pili), are polar filaments radiating from the surface of the bacterium to a length of 0.5-1.5 micrometers and numbering 100-300 per cell. They enable bacteria to colonize the epithelium of specific host organs. The protein is K88 fimbrial protein AC (faeG) of Escherichia coli.